We begin with the raw amino-acid sequence, 372 residues long: Aminomethyltransferase (372 aa).

This sequence belongs to the GcvT family. In terms of assembly, the glycine cleavage system is composed of four proteins: P, T, L and H.

The enzyme catalyses N(6)-[(R)-S(8)-aminomethyldihydrolipoyl]-L-lysyl-[protein] + (6S)-5,6,7,8-tetrahydrofolate = N(6)-[(R)-dihydrolipoyl]-L-lysyl-[protein] + (6R)-5,10-methylene-5,6,7,8-tetrahydrofolate + NH4(+). Its function is as follows. The glycine cleavage system catalyzes the degradation of glycine. This chain is Aminomethyltransferase, found in Burkholderia orbicola (strain MC0-3).